We begin with the raw amino-acid sequence, 371 residues long: 4-hydroxy-3-methylbut-2-en-1-yl diphosphate synthase (flavodoxin) (371 aa).

[4Fe-4S] cluster-binding residues include C272, C275, C307, and E314.

It belongs to the IspG family. [4Fe-4S] cluster is required as a cofactor.

It catalyses the reaction (2E)-4-hydroxy-3-methylbut-2-enyl diphosphate + oxidized [flavodoxin] + H2O + 2 H(+) = 2-C-methyl-D-erythritol 2,4-cyclic diphosphate + reduced [flavodoxin]. The protein operates within isoprenoid biosynthesis; isopentenyl diphosphate biosynthesis via DXP pathway; isopentenyl diphosphate from 1-deoxy-D-xylulose 5-phosphate: step 5/6. Converts 2C-methyl-D-erythritol 2,4-cyclodiphosphate (ME-2,4cPP) into 1-hydroxy-2-methyl-2-(E)-butenyl 4-diphosphate. The chain is 4-hydroxy-3-methylbut-2-en-1-yl diphosphate synthase (flavodoxin) from Pseudomonas paraeruginosa (strain DSM 24068 / PA7) (Pseudomonas aeruginosa (strain PA7)).